The following is a 407-amino-acid chain: Methylthioribose kinase (407 aa).

ATP-binding positions include asparagine 40, lysine 57, and 111 to 113 (EDL). Aspartate 229 is a binding site for substrate. 246–248 (DAE) is a binding site for ATP. Arginine 344 is a binding site for substrate.

Belongs to the methylthioribose kinase family. In terms of assembly, homodimer.

It catalyses the reaction 5-(methylsulfanyl)-D-ribose + ATP = 5-(methylsulfanyl)-alpha-D-ribose 1-phosphate + ADP + H(+). Its pathway is amino-acid biosynthesis; L-methionine biosynthesis via salvage pathway; S-methyl-5-thio-alpha-D-ribose 1-phosphate from S-methyl-5'-thioadenosine (hydrolase route): step 2/2. In terms of biological role, catalyzes the phosphorylation of methylthioribose into methylthioribose-1-phosphate. This Yersinia pseudotuberculosis serotype O:1b (strain IP 31758) protein is Methylthioribose kinase.